The chain runs to 333 residues: Diacylglycerol acyltransferase/mycolyltransferase Ag85C (333 aa).

Residues 1–44 form the signal peptide; that stretch reads MKFLQQMRKLFGLAAKFPARLTIAVIGTALLAGLVGVVGDTAIA. 86–87 contacts substrate; sequence LR. The fibronectin-binding stretch occupies residues 102–112; it reads FEEYYHSGLSV. Substrate is bound by residues Ser-170 and Asn-198. The active-site Nucleophile is Ser-170. Glu-274 is a catalytic residue. Residues 276–279 and 306–308 each bind substrate; these read LTLS and HSW. The active site involves His-306.

It belongs to the mycobacterial A85 antigen family. In terms of assembly, homodimer.

The protein resides in the secreted. It catalyses the reaction an acyl-CoA + a 1,2-diacyl-sn-glycerol = a triacyl-sn-glycerol + CoA. The catalysed reaction is 2 alpha,alpha'-trehalose 6-mycolate = alpha,alpha'-trehalose 6,6'-bismycolate + alpha,alpha-trehalose. Functionally, the antigen 85 proteins (FbpA, FbpB, FbpC) are responsible for the high affinity of mycobacteria to fibronectin, a large adhesive glycoprotein, which facilitates the attachment of M.tuberculosis to murine alveolar macrophages (AMs). They also help to maintain the integrity of the cell wall by catalyzing the transfer of mycolic acids to cell wall arabinogalactan and through the synthesis of alpha,alpha-trehalose dimycolate (TDM, cord factor). They catalyze the transfer of a mycoloyl residue from one molecule of alpha,alpha-trehalose monomycolate (TMM) to another TMM, leading to the formation of TDM. This chain is Diacylglycerol acyltransferase/mycolyltransferase Ag85C (fbpC), found in Mycobacterium leprae (strain TN).